Consider the following 945-residue polypeptide: Leucine--tRNA ligase (945 aa).

Positions 66–77 match the 'HIGH' region motif; sequence PYPSGTGLHVGH. Positions 716–720 match the 'KMSKS' region motif; the sequence is KMGKS. Position 719 (lysine 719) interacts with ATP.

This sequence belongs to the class-I aminoacyl-tRNA synthetase family.

The protein resides in the cytoplasm. It carries out the reaction tRNA(Leu) + L-leucine + ATP = L-leucyl-tRNA(Leu) + AMP + diphosphate. The polypeptide is Leucine--tRNA ligase (Rhodococcus jostii (strain RHA1)).